The primary structure comprises 501 residues: Endoglucanase 1 (501 aa).

Positions 1 to 29 (MALYLSSSRLITFLSFILLLSNGFSSSSS) are cleaved as a signal peptide. The active-site Nucleophile is Asp-96. Catalysis depends on residues His-422, Asp-473, and Glu-482.

Belongs to the glycosyl hydrolase 9 (cellulase E) family.

Its subcellular location is the secreted. The catalysed reaction is Endohydrolysis of (1-&gt;4)-beta-D-glucosidic linkages in cellulose, lichenin and cereal beta-D-glucans.. The protein is Endoglucanase 1 (CEL2) of Arabidopsis thaliana (Mouse-ear cress).